Here is a 237-residue protein sequence, read N- to C-terminus: MAAMVTKSAVQWPLPEARVPLPLILNAVGECAVEIACLDLEGVLVPEIWIAFAEKTGIESLRATTRDIPDYDVLMKQRLRILDEHGLKLADIQAVISTLKPLEGAVEFVDWLRERFQVVILSDTFYEFSQPLMRQLGFPTLLCHRLITDETDRVVSYQLRQKDPKRQSVLAFKSLYYRIIAAGDSYNDTTMLGEADAGILFHAPDNVIREFPQFPAVHTFDELKKEFIKASNRELVL.

Catalysis depends on Asp-39, which acts as the Nucleophile. Residues Asp-39 and Glu-41 each contribute to the Mg(2+) site. Catalysis depends on Glu-41, which acts as the Proton donor. Residues Glu-47, Arg-78, 122–123 (SD), and Lys-165 each bind substrate. Asp-184 contributes to the Mg(2+) binding site. A substrate-binding site is contributed by Asn-187.

Belongs to the thrH family. The cofactor is Mg(2+).

The catalysed reaction is O-phospho-L-serine + H2O = L-serine + phosphate. It catalyses the reaction O-phospho-D-serine + H2O = D-serine + phosphate. Its pathway is amino-acid biosynthesis; L-serine biosynthesis; L-serine from 3-phospho-D-glycerate: step 3/3. Phosphoserine phosphatase that mediates dephosphorylation of phosphoserine in the serine biosynthesis pathway. Also able to dephosphorylate phospho-threonine. This chain is Phosphoserine phosphatase, found in Pseudomonas syringae pv. tomato (strain ATCC BAA-871 / DC3000).